Consider the following 437-residue polypeptide: Aspartic proteinase nepenthesin-1 (437 aa).

A signal peptide spans 1–24; the sequence is MASSLYSFLLALSIVYIFVAPTHS. A propeptide spans 25–78 (activation peptide); it reads TSRTALNHRHEAKVTGFQIMLEHVDSGKNLTKFQLLERAIERGSRRLQRLEAML. 2 N-linked (GlcNAc...) asparagine glycosylation sites follow: Asn-53 and Asn-98. Residues 95–430 enclose the Peptidase A1 domain; that stretch reads YLMNLSIGTP…DTGNSVVSFA (336 aa). The active site involves Asp-113. 6 disulfide bridges follow: Cys-123/Cys-126, Cys-129/Cys-203, Cys-150/Cys-168, Cys-155/Cys-163, Cys-240/Cys-434, and Cys-354/Cys-395. Asn-131 carries N-linked (GlcNAc...) asparagine glycosylation. Asn-198, Asn-267, and Asn-307 each carry an N-linked (GlcNAc...) asparagine glycan. Asp-315 is a catalytic residue. Residue Asn-345 is glycosylated (N-linked (GlcNAc...) asparagine).

It belongs to the peptidase A1 family.

The protein resides in the secreted. It catalyses the reaction Similar to pepsin, but also cleaves on either side of Asp and at Lys-|-Arg.. Inhibited by pepstatin and by diazoacetyl-D,L-norleucine methyl ester (DAN) in the presence of Cu(2+) ions. Its function is as follows. Extracellular proteinase found in the pitcher fluid of carnivorous plants. Digest prey for nitrogen uptake. The sequence is that of Aspartic proteinase nepenthesin-1 (nep1) from Nepenthes gracilis (Slender pitcher plant).